The chain runs to 400 residues: Large envelope protein (400 aa).

The residue at position 1 (M1) is an N-acetylmethionine. 3 disordered regions span residues M1–G64, L85–Q118, and P143–N174. G2 carries the N-myristoyl glycine; by host lipid modification. The interval G2–A119 is pre-S1. The pre-S stretch occupies residues G2 to N174. Over G2 to G181 the chain is Virion surface; in external conformation. Residues G2 to R253 are Intravirion; in internal conformation-facing. The N-linked (GlcNAc...) asparagine glycan is linked to W4. Over residues S96–T106 the composition is skewed to polar residues. Residues M120 to N174 form a pre-S2 region. The segment covering P155–S166 has biased composition (low complexity). The helical transmembrane segment at F182–I202 threads the bilayer. The Intravirion; in external conformation portion of the chain corresponds to P203–R253. A helical membrane pass occupies residues F254–Y274. Topologically, residues Q275–S348 are virion surface. The N-linked (GlcNAc...) asparagine; by host glycan is linked to N320. The helical transmembrane segment at L349–I369 threads the bilayer. Residues W370–W375 are Intravirion-facing. A helical membrane pass occupies residues G376–V398. Residues Y399–I400 are Virion surface-facing.

It belongs to the orthohepadnavirus major surface antigen family. As to quaternary structure, in its internal form (Li-HBsAg), interacts with the capsid protein and with the isoform S. Interacts with host chaperone CANX. In terms of assembly, associates with host chaperone CANX through its pre-S2 N glycan; this association may be essential for isoform M proper secretion. Interacts with isoform L. Interacts with the antigens of satellite virus HDV (HDVAgs); this interaction is required for encapsidation of HDV genomic RNA. In terms of processing, isoform M is N-terminally acetylated by host at a ratio of 90%, and N-glycosylated by host at the pre-S2 region. Post-translationally, myristoylated.

Its subcellular location is the virion membrane. Functionally, the large envelope protein exists in two topological conformations, one which is termed 'external' or Le-HBsAg and the other 'internal' or Li-HBsAg. In its external conformation the protein attaches the virus to cell receptors and thereby initiating infection. This interaction determines the species specificity and liver tropism. This attachment induces virion internalization predominantly through caveolin-mediated endocytosis. The large envelope protein also assures fusion between virion membrane and endosomal membrane. In its internal conformation the protein plays a role in virion morphogenesis and mediates the contact with the nucleocapsid like a matrix protein. Its function is as follows. The middle envelope protein plays an important role in the budding of the virion. It is involved in the induction of budding in a nucleocapsid independent way. In this process the majority of envelope proteins bud to form subviral lipoprotein particles of 22 nm of diameter that do not contain a nucleocapsid. This Homo sapiens (Human) protein is Large envelope protein.